Consider the following 69-residue polypeptide: Proteinase inhibitor (69 aa).

S1 bears the N-acetylserine mark. The cysteines at positions 4 and 49 are disulfide-linked.

In terms of biological role, in vitro, strong inhibitor of bovine beta-trypsin, weak inhibitor of alpha-chymotrypsin, subtilisin BPN', subtilisin Carlsberg and cathepsin G. In Linum usitatissimum (Flax), this protein is Proteinase inhibitor.